Consider the following 465-residue polypeptide: Flavin-containing monooxygenase FMO GS-OX-like 2 (465 aa).

18–23 contacts FAD; the sequence is GAGAAG. 217 to 222 provides a ligand contact to NADP(+); the sequence is GSSASG.

Belongs to the FMO family. FAD serves as cofactor.

In terms of biological role, catalyzes the conversion of methylthioalkyl glucosinolates of any chain length into methylsulfinylalkyl glucosinolates. The chain is Flavin-containing monooxygenase FMO GS-OX-like 2 from Arabidopsis thaliana (Mouse-ear cress).